A 276-amino-acid polypeptide reads, in one-letter code: Putative pyridoxine kinase (276 aa).

Position 139 (asparagine 139) interacts with ATP. Glutamate 142 serves as a coordination point for Mg(2+). ATP is bound by residues 176 to 180 (KGGKA), aspartate 188, glycine 213, and lysine 238.

It belongs to the ThiD family.

It catalyses the reaction pyridoxal + ATP = pyridoxal 5'-phosphate + ADP + H(+). In terms of biological role, phosphorylates B6 vitamers; functions in a salvage pathway. Uses pyridoxal, pyridoxine, and pyridoxamine as substrates. The protein is Putative pyridoxine kinase (pdxK) of Staphylococcus epidermidis (strain ATCC 35984 / DSM 28319 / BCRC 17069 / CCUG 31568 / BM 3577 / RP62A).